Reading from the N-terminus, the 600-residue chain is Mitoguardin 1 (600 aa).

2 helical membrane-spanning segments follow: residues 15 to 32 and 38 to 58; these read TYAV…YSLS and PVAK…IFLA. Residues S257 and S261 each carry the phosphoserine modification.

It belongs to the mitoguardin family. In terms of assembly, homodimer and heterodimer; forms heterodimers with MIGA2. Interacts with PLD6/MitoPLD.

It localises to the mitochondrion outer membrane. In terms of biological role, regulator of mitochondrial fusion. Acts by forming homo- and heterodimers at the mitochondrial outer membrane and facilitating the formation of PLD6/MitoPLD dimers. May act by regulating phospholipid metabolism via PLD6/MitoPLD. The protein is Mitoguardin 1 of Mus musculus (Mouse).